A 238-amino-acid polypeptide reads, in one-letter code: ATP synthase subunit a (238 aa).

Helical transmembrane passes span 17–37 (LSDM…AVAA), 75–95 (FLTL…LGLP), 112–132 (DATV…YYGV), 179–199 (ILLG…AVGA), and 202–222 (FPIM…AFIF).

This sequence belongs to the ATPase A chain family. As to quaternary structure, F-type ATPases have 2 components, CF(1) - the catalytic core - and CF(0) - the membrane proton channel. CF(1) has five subunits: alpha(3), beta(3), gamma(1), delta(1), epsilon(1). CF(0) has three main subunits: a(1), b(2) and c(9-12). The alpha and beta chains form an alternating ring which encloses part of the gamma chain. CF(1) is attached to CF(0) by a central stalk formed by the gamma and epsilon chains, while a peripheral stalk is formed by the delta and b chains.

Its subcellular location is the cell membrane. In terms of biological role, key component of the proton channel; it plays a direct role in the translocation of protons across the membrane. In Bacillus sp. (strain PS3), this protein is ATP synthase subunit a.